We begin with the raw amino-acid sequence, 179 residues long: Protein GrpE (179 aa).

The interval 1-29 (MQDQDKYAEQAASIEDPVTAEAASATTPT) is disordered.

Belongs to the GrpE family. As to quaternary structure, homodimer.

The protein localises to the cytoplasm. Its function is as follows. Participates actively in the response to hyperosmotic and heat shock by preventing the aggregation of stress-denatured proteins, in association with DnaK and GrpE. It is the nucleotide exchange factor for DnaK and may function as a thermosensor. Unfolded proteins bind initially to DnaJ; upon interaction with the DnaJ-bound protein, DnaK hydrolyzes its bound ATP, resulting in the formation of a stable complex. GrpE releases ADP from DnaK; ATP binding to DnaK triggers the release of the substrate protein, thus completing the reaction cycle. Several rounds of ATP-dependent interactions between DnaJ, DnaK and GrpE are required for fully efficient folding. This Janthinobacterium sp. (strain Marseille) (Minibacterium massiliensis) protein is Protein GrpE.